The chain runs to 78 residues: Large ribosomal subunit protein bL28 (78 aa).

The interval Met1 to Ala24 is disordered.

It belongs to the bacterial ribosomal protein bL28 family.

The chain is Large ribosomal subunit protein bL28 from Aeromonas salmonicida (strain A449).